The sequence spans 301 residues: Probable alpha-L-glutamate ligase (301 aa).

The region spanning 104–287 (LQLLSRRGIG…VAGMIIEHLE (184 aa)) is the ATP-grasp domain. ATP contacts are provided by residues K141, 178-179 (EY), D187, and 211-213 (RSN). The Mg(2+) site is built by D248, E260, and N262. Residues D248, E260, and N262 each coordinate Mn(2+).

The protein belongs to the RimK family. It depends on Mg(2+) as a cofactor. Requires Mn(2+) as cofactor.

The sequence is that of Probable alpha-L-glutamate ligase from Pseudomonas putida (strain W619).